The primary structure comprises 751 residues: Polyribonucleotide nucleotidyltransferase (751 aa).

The Mg(2+) site is built by aspartate 528 and aspartate 534. In terms of domain architecture, KH spans 594–653 (PRVISVTVPVSKIGEVIGPKGKMINQIQEDTGTDISIEDDGTVYIGATDGPSAEAARSAI). Residues 665-737 (GERYLGTVVK…DRGKLSLAPV (73 aa)) form the S1 motif domain.

This sequence belongs to the polyribonucleotide nucleotidyltransferase family. Mg(2+) serves as cofactor.

It is found in the cytoplasm. The catalysed reaction is RNA(n+1) + phosphate = RNA(n) + a ribonucleoside 5'-diphosphate. Its function is as follows. Involved in mRNA degradation. Catalyzes the phosphorolysis of single-stranded polyribonucleotides processively in the 3'- to 5'-direction. In Kocuria rhizophila (strain ATCC 9341 / DSM 348 / NBRC 103217 / DC2201), this protein is Polyribonucleotide nucleotidyltransferase.